Here is a 522-residue protein sequence, read N- to C-terminus: Lysophospholipid acyltransferase LPCAT4 (522 aa).

Transmembrane regions (helical) follow at residues 43–63 (ILGF…LFLM) and 92–112 (HLIY…WITI). An HXXXXD motif motif is present at residues 130–135 (HSTFFD). Asparagine 166 and asparagine 517 each carry an N-linked (GlcNAc...) asparagine glycan. The disordered stretch occupies residues 496–522 (GRRKPPHIQQNGGCSGKNNPRNQSKMD). A compositionally biased stretch (polar residues) spans 503–522 (IQQNGGCSGKNNPRNQSKMD).

The protein belongs to the 1-acyl-sn-glycerol-3-phosphate acyltransferase family.

The protein resides in the endoplasmic reticulum membrane. It carries out the reaction a 1-acyl-sn-glycero-3-phosphoethanolamine + an acyl-CoA = a 1,2-diacyl-sn-glycero-3-phosphoethanolamine + CoA. The enzyme catalyses a 1-O-(1Z-alkenyl)-sn-glycero-3-phosphoethanolamine + an acyl-CoA = a 1-O-(1Z-alkenyl)-2-acyl-sn-glycero-3-phosphoethanolamine + CoA. The catalysed reaction is a 1-acyl-sn-glycero-3-phosphocholine + an acyl-CoA = a 1,2-diacyl-sn-glycero-3-phosphocholine + CoA. It catalyses the reaction a 1-O-alkyl-sn-glycero-3-phosphocholine + acetyl-CoA = a 1-O-alkyl-2-acetyl-sn-glycero-3-phosphocholine + CoA. It carries out the reaction a 1-acyl-sn-glycero-3-phospho-L-serine + an acyl-CoA = a 1,2-diacyl-sn-glycero-3-phospho-L-serine + CoA. Its pathway is lipid metabolism; phospholipid metabolism. In terms of biological role, displays acyl-CoA-dependent lysophospholipid acyltransferase activity with a subset of lysophospholipids as substrates. Prefers long chain acyl-CoAs (C16, C18) as acyl donors. This chain is Lysophospholipid acyltransferase LPCAT4 (lpcat4), found in Xenopus tropicalis (Western clawed frog).